The sequence spans 156 residues: S-ribosylhomocysteine lyase (156 aa).

The Fe cation site is built by histidine 54, histidine 58, and cysteine 123.

This sequence belongs to the LuxS family. Homodimer. Requires Fe cation as cofactor.

The enzyme catalyses S-(5-deoxy-D-ribos-5-yl)-L-homocysteine = (S)-4,5-dihydroxypentane-2,3-dione + L-homocysteine. Its function is as follows. Involved in the synthesis of autoinducer 2 (AI-2) which is secreted by bacteria and is used to communicate both the cell density and the metabolic potential of the environment. The regulation of gene expression in response to changes in cell density is called quorum sensing. Catalyzes the transformation of S-ribosylhomocysteine (RHC) to homocysteine (HC) and 4,5-dihydroxy-2,3-pentadione (DPD). The sequence is that of S-ribosylhomocysteine lyase from Ligilactobacillus salivarius (strain UCC118) (Lactobacillus salivarius).